The following is a 96-amino-acid chain: Large ribosomal subunit protein uL23 (96 aa).

The protein belongs to the universal ribosomal protein uL23 family. In terms of assembly, part of the 50S ribosomal subunit. Contacts protein L29, and trigger factor when it is bound to the ribosome.

Functionally, one of the early assembly proteins it binds 23S rRNA. One of the proteins that surrounds the polypeptide exit tunnel on the outside of the ribosome. Forms the main docking site for trigger factor binding to the ribosome. The chain is Large ribosomal subunit protein uL23 from Enterococcus faecalis (strain ATCC 700802 / V583).